The following is a 131-amino-acid chain: Snaclec A8 (131 aa).

3 disulfides stabilise this stretch: cysteine 2–cysteine 13, cysteine 30–cysteine 129, and cysteine 104–cysteine 121. Residues 9–130 enclose the C-type lectin domain; that stretch reads HEGHCYKVFN…CGQPYRFTCE (122 aa).

Belongs to the snaclec family. Heterodimer; disulfide-linked. Expressed by the venom gland.

Its subcellular location is the secreted. In terms of biological role, interferes with one step of hemostasis (modulation of platelet aggregation, or coagulation cascade, for example). This Macrovipera lebetinus (Levantine viper) protein is Snaclec A8.